The following is a 439-amino-acid chain: Ribosomal protein uS12 methylthiotransferase RimO (439 aa).

One can recognise an MTTase N-terminal domain in the interval 4–114 (PKVGFVSLGR…VVRAVHGVAP (111 aa)). The Radical SAM core domain maps to 133-370 (LTPRHYAYLK…MEHQQAISTA (238 aa)). Residues C147, C151, and C154 each coordinate [4Fe-4S] cluster. In terms of domain architecture, TRAM spans 373–439 (STRVGREIDV…EYDLWGERIA (67 aa)).

Belongs to the methylthiotransferase family. RimO subfamily. It depends on [4Fe-4S] cluster as a cofactor.

It is found in the cytoplasm. The catalysed reaction is L-aspartate(89)-[ribosomal protein uS12]-hydrogen + (sulfur carrier)-SH + AH2 + 2 S-adenosyl-L-methionine = 3-methylsulfanyl-L-aspartate(89)-[ribosomal protein uS12]-hydrogen + (sulfur carrier)-H + 5'-deoxyadenosine + L-methionine + A + S-adenosyl-L-homocysteine + 2 H(+). In terms of biological role, catalyzes the methylthiolation of an aspartic acid residue of ribosomal protein uS12. This is Ribosomal protein uS12 methylthiotransferase RimO from Bordetella bronchiseptica (strain ATCC BAA-588 / NCTC 13252 / RB50) (Alcaligenes bronchisepticus).